The following is a 499-amino-acid chain: L-arabinose isomerase (499 aa).

Positions 306, 333, 350, and 449 each coordinate Mn(2+).

Belongs to the arabinose isomerase family. Mn(2+) is required as a cofactor.

The catalysed reaction is beta-L-arabinopyranose = L-ribulose. It participates in carbohydrate degradation; L-arabinose degradation via L-ribulose; D-xylulose 5-phosphate from L-arabinose (bacterial route): step 1/3. In terms of biological role, catalyzes the conversion of L-arabinose to L-ribulose. In Tolumonas auensis (strain DSM 9187 / NBRC 110442 / TA 4), this protein is L-arabinose isomerase.